A 1021-amino-acid polypeptide reads, in one-letter code: tRNA wybutosine-synthesizing protein 4 (1021 aa).

S-adenosyl-L-methionine is bound by residues Arg68, Asp122, Asp171–Leu172, and Glu198. Residues Pro826–Arg980 enclose the JmjC domain.

The protein belongs to the methyltransferase superfamily. LCMT family.

The catalysed reaction is 7-[(3S)-3-amino-3-carboxypropyl]wyosine(37) in tRNA(Phe) + S-adenosyl-L-methionine = 7-[(3S)-(3-amino-3-methoxycarbonyl)propyl]wyosine(37) in tRNA(Phe) + S-adenosyl-L-homocysteine. It carries out the reaction 7-[(3S)-(3-amino-3-methoxycarbonyl)propyl]wyosine(37) in tRNA(Phe) + S-adenosyl-L-methionine + CO2 = wybutosine(37) in tRNA(Phe) + S-adenosyl-L-homocysteine + 2 H(+). It participates in tRNA modification; wybutosine-tRNA(Phe) biosynthesis. Its function is as follows. Probable S-adenosyl-L-methionine-dependent methyltransferase that acts as a component of the wybutosine biosynthesis pathway. Wybutosine is a hyper modified guanosine with a tricyclic base found at the 3'-position adjacent to the anticodon of eukaryotic phenylalanine tRNA. May methylate the carboxyl group of leucine residues to form alpha-leucine ester residues. This Gibberella zeae (strain ATCC MYA-4620 / CBS 123657 / FGSC 9075 / NRRL 31084 / PH-1) (Wheat head blight fungus) protein is tRNA wybutosine-synthesizing protein 4 (PPM2).